The sequence spans 43 residues: MRFKAKCSGCSTEFKAETRKTFGTSIRIHEVMTGHTVKVKQEV.

This is Gene 75 protein (75) from Mycobacterium (Mycobacteriophage L5).